A 300-amino-acid chain; its full sequence is Bifunctional protein FolD (300 aa).

NADP(+)-binding positions include 169–171 (GRG), S196, and I237.

Belongs to the tetrahydrofolate dehydrogenase/cyclohydrolase family. As to quaternary structure, homodimer.

It carries out the reaction (6R)-5,10-methylene-5,6,7,8-tetrahydrofolate + NADP(+) = (6R)-5,10-methenyltetrahydrofolate + NADPH. The enzyme catalyses (6R)-5,10-methenyltetrahydrofolate + H2O = (6R)-10-formyltetrahydrofolate + H(+). The protein operates within one-carbon metabolism; tetrahydrofolate interconversion. Functionally, catalyzes the oxidation of 5,10-methylenetetrahydrofolate to 5,10-methenyltetrahydrofolate and then the hydrolysis of 5,10-methenyltetrahydrofolate to 10-formyltetrahydrofolate. The chain is Bifunctional protein FolD from Clavibacter michiganensis subsp. michiganensis (strain NCPPB 382).